A 547-amino-acid polypeptide reads, in one-letter code: Nitrate transporter 2.1 (547 aa).

The next 12 helical transmembrane spans lie at tryptophan 53 to isoleucine 73, asparagine 86 to valine 106, tyrosine 113 to threonine 133, phenylalanine 143 to phenylalanine 163, alanine 173 to isoleucine 193, alanine 211 to isoleucine 231, leucine 262 to valine 280, phenylalanine 296 to phenylalanine 316, isoleucine 338 to valine 358, isoleucine 366 to isoleucine 386, glycine 400 to glycine 420, and glycine 433 to phenylalanine 453.

The protein belongs to the major facilitator superfamily. Nitrate/nitrite porter (TC 2.A.1.8) family.

It localises to the cell membrane. With respect to regulation, nitrite transport mediated by system 1 is very sensitive to inhibition by nitrate. Its function is as follows. Involved in nitrate transport, but does not seem to be able to mediate transport by its own. Acts as a dual component transporter with NAR2 (system 1). Imports nitrate with high affinity when expressed with NAR2 in a heterologous system (Xenopus oocytes). Involved in a high affinity and a high capacity transport specific for both nitrate and nitrite. This is Nitrate transporter 2.1 from Chlamydomonas reinhardtii (Chlamydomonas smithii).